We begin with the raw amino-acid sequence, 37 residues long: Chitinase-like protein (37 aa).

The tract at residues 1–20 (VLLSVGGDADTESPEKKNLG) is disordered. The GH18 domain occupies 1–37 (VLLSVGGDADTESPEKKNLGGVSIVDLSMDDFRGLLT).

The protein belongs to the glycosyl hydrolase 18 family. IDGF subfamily. In terms of processing, glycosylated.

It localises to the secreted. Functionally, cooperates with insulin-like peptides to stimulate the proliferation, polarization and motility of imaginal disk cells. May act by stabilizing the binding of insulin-like peptides to its receptor through a simultaneous interaction with both molecules to form a multiprotein signaling complex. This chain is Chitinase-like protein, found in Heliothis virescens (Tobacco budworm moth).